A 421-amino-acid polypeptide reads, in one-letter code: Putative hydro-lyase KRH_21160 (421 aa).

2 disordered regions span residues 200–298 (TWGH…SPVT) and 312–421 (TRAG…AVSR). The segment covering 224 to 237 (GSRRRPRWWSRLRR) has biased composition (basic residues). 2 stretches are compositionally biased toward low complexity: residues 243–260 (PRAT…TRCP) and 370–380 (SRGPGPCPRAA).

Belongs to the D-glutamate cyclase family.

This is Putative hydro-lyase KRH_21160 from Kocuria rhizophila (strain ATCC 9341 / DSM 348 / NBRC 103217 / DC2201).